We begin with the raw amino-acid sequence, 87 residues long: Defensin-like protein 218 (87 aa).

A signal peptide spans methionine 1–serine 19. 3 cysteine pairs are disulfide-bonded: cysteine 51/cysteine 70, cysteine 54/cysteine 75, and cysteine 58/cysteine 77.

Belongs to the DEFL family.

Its subcellular location is the secreted. The protein is Defensin-like protein 218 of Arabidopsis thaliana (Mouse-ear cress).